We begin with the raw amino-acid sequence, 208 residues long: Large ribosomal subunit protein uL3 (208 aa).

A disordered region spans residues 123–147 (RHGQSRGPMAHGSRYHRRPGSMGPV).

The protein belongs to the universal ribosomal protein uL3 family. Part of the 50S ribosomal subunit. Forms a cluster with proteins L14 and L19.

One of the primary rRNA binding proteins, it binds directly near the 3'-end of the 23S rRNA, where it nucleates assembly of the 50S subunit. This chain is Large ribosomal subunit protein uL3, found in Streptococcus gordonii (strain Challis / ATCC 35105 / BCRC 15272 / CH1 / DL1 / V288).